A 184-amino-acid polypeptide reads, in one-letter code: Chromobox protein homolog hpl-1 (184 aa).

The span at 1–13 (MSRQNPVRSTRGN) shows a compositional bias: polar residues. 2 disordered regions span residues 1–27 (MSRQNPVRSTRGNSLRAREAQQAQDAP) and 87–115 (AAKRTTRKRRYSPQPSTSSSAELQPSTSD). The 59-residue stretch at 37-95 (FVVEKVLNKRLTRGGSEYYIKWQGFPESECSWEPIENLQCDRMIQEYEKEAAKRTTRKR) folds into the Chromo domain. A compositionally biased stretch (polar residues) spans 99-115 (PQPSTSSSAELQPSTSD).

Interacts with histone demethylase spr-5. Interacts with chromobox protein homolog hpl-2. Interacts with histone H3 tails methylated at 'Lys-9' (H3K9me3) and 'Lys-23'(H3K23me2). Interacts with histone H1 variant his-24 (when monomethylated at 'Lys-14'); the interaction is direct. May interact with the REST corepressor rcor-1, histone deacetylase hda-1, and the histone demethylase lsd-1.

The protein resides in the nucleus. Its function is as follows. Seems to be involved in transcriptional silencing in heterochromatin-like complexes. Involved in epigenetic repression. Probably does not act as global transcriptional repressor. Plays a role in linking epigenetic regulation with the innate immune response. Acting in concert with chromobox protein homolog hpl-2 and histone H1 protein his-24, involved in reproduction, somatic gonad development, male tail development and vulval cell fate decisions; perhaps as a result of modulating expression of Hox genes mab-5 and egl-5. Role in growth and somatic gonad development is antagonized by histone-lysine N-methyltransferase set-2/SET1. Required for larval development, acting redundantly with hpl-2. Plays a role in the formation of the vulva and in fertility, acting together with a CoREST-like complex, and hpl-2. This Caenorhabditis elegans protein is Chromobox protein homolog hpl-1.